We begin with the raw amino-acid sequence, 229 residues long: ATP synthase subunit a (229 aa).

7 helical membrane-spanning segments follow: residues 24 to 44 (RLCFIVYFNCLMLIFDFLLFC), 45 to 65 (LFDLYLFVGLCLFLLLWFMLF), 83 to 103 (LLFCIVFLLYIAFLFLFCFLC), 117 to 137 (FMDVFFIRFLLCFLECFSLLC), 143 to 163 (FLRLFCNLLSSHFLLLMFFDF), 177 to 199 (CYFILFIFVFCFCLLFYVFLYLL), and 206 to 228 (LQLFIFCNMILQLIMDFLLFLLF).

It belongs to the ATPase A chain family. In terms of assembly, F-type ATPases have 2 components, CF(1) - the catalytic core - and CF(0) - the membrane proton channel. CF(1) has five subunits: alpha(3), beta(3), gamma(1), delta(1), epsilon(1). CF(0) has three main subunits: a, b and c.

The protein localises to the mitochondrion inner membrane. Functionally, mitochondrial membrane ATP synthase (F(1)F(0) ATP synthase or Complex V) produces ATP from ADP in the presence of a proton gradient across the membrane which is generated by electron transport complexes of the respiratory chain. F-type ATPases consist of two structural domains, F(1) - containing the extramembraneous catalytic core and F(0) - containing the membrane proton channel, linked together by a central stalk and a peripheral stalk. During catalysis, ATP synthesis in the catalytic domain of F(1) is coupled via a rotary mechanism of the central stalk subunits to proton translocation. Key component of the proton channel; it may play a direct role in the translocation of protons across the membrane. This chain is ATP synthase subunit a (ATP6), found in Trypanosoma brucei brucei.